We begin with the raw amino-acid sequence, 226 residues long: 7-cyano-7-deazaguanine synthase (226 aa).

ATP is bound at residue 8 to 18 (ISGGLDSTTCL). The Zn(2+) site is built by Cys188, Cys198, Cys201, and Cys204.

Belongs to the QueC family. Zn(2+) is required as a cofactor.

It carries out the reaction 7-carboxy-7-deazaguanine + NH4(+) + ATP = 7-cyano-7-deazaguanine + ADP + phosphate + H2O + H(+). It participates in purine metabolism; 7-cyano-7-deazaguanine biosynthesis. In terms of biological role, catalyzes the ATP-dependent conversion of 7-carboxy-7-deazaguanine (CDG) to 7-cyano-7-deazaguanine (preQ(0)). In Coxiella burnetii (strain RSA 331 / Henzerling II), this protein is 7-cyano-7-deazaguanine synthase.